A 131-amino-acid polypeptide reads, in one-letter code: Profilin-6 (131 aa).

Cys-13 and Cys-115 form a disulfide bridge. The short motif at 81-97 is the Involved in PIP2 interaction element; it reads AVIRGKKGSGGITVKKT. Thr-111 is modified (phosphothreonine).

It belongs to the profilin family. Occurs in many kinds of cells as a complex with monomeric actin in a 1:1 ratio. Post-translationally, phosphorylated by MAP kinases.

It is found in the cytoplasm. It localises to the cytoskeleton. Its function is as follows. Binds to actin and affects the structure of the cytoskeleton. At high concentrations, profilin prevents the polymerization of actin, whereas it enhances it at low concentrations. The sequence is that of Profilin-6 from Zea mays (Maize).